We begin with the raw amino-acid sequence, 166 residues long: MVNFEKNINELQEKLISVNRVSKTVKGGRIFSFTALTVVGDCQGKIGFGYGKSKEVPLAIQKAMDKARKNMIIIPIVCKTLQHEINGYHTGSRVFMKPASEGTGIIAGGAMRAVLEVAGVHNVLAKVYGSTNPINVVRATVNALKKMRFPMHIAEKRGKSIDDILG.

Positions 11 to 74 constitute an S5 DRBM domain; it reads LQEKLISVNR…DKARKNMIII (64 aa).

This sequence belongs to the universal ribosomal protein uS5 family. Part of the 30S ribosomal subunit. Contacts proteins S4 and S8.

In terms of biological role, with S4 and S12 plays an important role in translational accuracy. Its function is as follows. Located at the back of the 30S subunit body where it stabilizes the conformation of the head with respect to the body. This chain is Small ribosomal subunit protein uS5, found in Wigglesworthia glossinidia brevipalpis.